The chain runs to 447 residues: Phosphoglucosamine mutase (447 aa).

Ser-101 acts as the Phosphoserine intermediate in catalysis. Residues Ser-101, Asp-242, Asp-244, and Asp-246 each contribute to the Mg(2+) site. Phosphoserine is present on Ser-101.

It belongs to the phosphohexose mutase family. Requires Mg(2+) as cofactor. In terms of processing, activated by phosphorylation.

It catalyses the reaction alpha-D-glucosamine 1-phosphate = D-glucosamine 6-phosphate. In terms of biological role, catalyzes the conversion of glucosamine-6-phosphate to glucosamine-1-phosphate. This chain is Phosphoglucosamine mutase, found in Azorhizobium caulinodans (strain ATCC 43989 / DSM 5975 / JCM 20966 / LMG 6465 / NBRC 14845 / NCIMB 13405 / ORS 571).